Here is a 458-residue protein sequence, read N- to C-terminus: RuvB-like helicase 1 (458 aa).

Position 71-78 (71-78) interacts with ATP; the sequence is GGPGTGKT.

It belongs to the RuvB family. May form heterododecamers with RVB2. Component of the SWR1 chromatin remodeling complex, the INO80 chromatin remodeling complex, and of the R2TP complex.

The protein localises to the nucleus. The enzyme catalyses ATP + H2O = ADP + phosphate + H(+). Its function is as follows. DNA helicase which participates in several chromatin remodeling complexes, including the SWR1 and the INO80 complexes. The SWR1 complex mediates the ATP-dependent exchange of histone H2A for the H2A variant HZT1 leading to transcriptional regulation of selected genes by chromatin remodeling. The INO80 complex remodels chromatin by shifting nucleosomes and is involved in DNA repair. Also involved in pre-rRNA processing. This Gibberella zeae (strain ATCC MYA-4620 / CBS 123657 / FGSC 9075 / NRRL 31084 / PH-1) (Wheat head blight fungus) protein is RuvB-like helicase 1 (RVB1).